The chain runs to 172 residues: uncharacterized protein (172 aa).

This is an uncharacterized protein from Pasteurella multocida (strain Pm70).